Reading from the N-terminus, the 331-residue chain is MIKKYYESDADLAAVQGKQIAVIGYGSQGRGQALNLRDSGLSVIIGLRPGRSFQQASEDGFEVFPVADAVKKADIIQILLPDESQGAVYKTEIRPYLADKKCLMFSHGFNIHYGQIVPPPNVDVVMVAPKGPGHMVRRTFEEGKGVPALIAIEQDYTGDAQAIALGYAKGIGATRAVVFETTFREETETDLFGEQAVLCGGVTSLIKAGFETLVDAGYAPEMAYLEVLHEMKLIVDMIYEGGFTNMRDSISNTALYGDLTRGPRVIGEDSRIAMEEILEEIQNGEFAREWMLENIVNRPVFTALKRNDEEHLLEEVGAEIRGLMPQFKKNA.

The region spanning 2–181 (IKKYYESDAD…GATRAVVFET (180 aa)) is the KARI N-terminal Rossmann domain. Residues 25–28 (YGSQ), arginine 48, serine 52, and 82–85 (DESQ) each bind NADP(+). Histidine 107 is a catalytic residue. Glycine 133 serves as a coordination point for NADP(+). The region spanning 182–327 (TFREETETDL…AEIRGLMPQF (146 aa)) is the KARI C-terminal knotted domain. 4 residues coordinate Mg(2+): aspartate 190, glutamate 194, glutamate 226, and glutamate 230. Serine 251 is a binding site for substrate.

This sequence belongs to the ketol-acid reductoisomerase family. The cofactor is Mg(2+).

It catalyses the reaction (2R)-2,3-dihydroxy-3-methylbutanoate + NADP(+) = (2S)-2-acetolactate + NADPH + H(+). The catalysed reaction is (2R,3R)-2,3-dihydroxy-3-methylpentanoate + NADP(+) = (S)-2-ethyl-2-hydroxy-3-oxobutanoate + NADPH + H(+). The protein operates within amino-acid biosynthesis; L-isoleucine biosynthesis; L-isoleucine from 2-oxobutanoate: step 2/4. It functions in the pathway amino-acid biosynthesis; L-valine biosynthesis; L-valine from pyruvate: step 2/4. Involved in the biosynthesis of branched-chain amino acids (BCAA). Catalyzes an alkyl-migration followed by a ketol-acid reduction of (S)-2-acetolactate (S2AL) to yield (R)-2,3-dihydroxy-isovalerate. In the isomerase reaction, S2AL is rearranged via a Mg-dependent methyl migration to produce 3-hydroxy-3-methyl-2-ketobutyrate (HMKB). In the reductase reaction, this 2-ketoacid undergoes a metal-dependent reduction by NADPH to yield (R)-2,3-dihydroxy-isovalerate. The chain is Ketol-acid reductoisomerase (NADP(+)) from Methanosphaerula palustris (strain ATCC BAA-1556 / DSM 19958 / E1-9c).